Reading from the N-terminus, the 154-residue chain is MSELPVVSIFTDGACSGNPGPGGWGAILRFGDKEKELKGGEPHTTNNRMELMAAISALEALKKSCQVELYTDSQYVRQGITGWIHGWKRNGWKTADKKPVKNAELWQRLDAALKPHKINWHWVKGHAGHPENERADQLARDGVAMARMQKNVRS.

The region spanning 3-144 (ELPVVSIFTD…ADQLARDGVA (142 aa)) is the RNase H type-1 domain. Mg(2+)-binding residues include Asp12, Glu50, Asp72, and Asp136.

This sequence belongs to the RNase H family. As to quaternary structure, monomer. Requires Mg(2+) as cofactor.

It is found in the cytoplasm. It catalyses the reaction Endonucleolytic cleavage to 5'-phosphomonoester.. Endonuclease that specifically degrades the RNA of RNA-DNA hybrids. In Bradyrhizobium sp. (strain ORS 278), this protein is Ribonuclease H.